The sequence spans 125 residues: Small ribosomal subunit protein uS12 (125 aa).

3-methylthioaspartic acid is present on Asp89.

It belongs to the universal ribosomal protein uS12 family. Part of the 30S ribosomal subunit. Contacts proteins S8 and S17. May interact with IF1 in the 30S initiation complex.

Its function is as follows. With S4 and S5 plays an important role in translational accuracy. In terms of biological role, interacts with and stabilizes bases of the 16S rRNA that are involved in tRNA selection in the A site and with the mRNA backbone. Located at the interface of the 30S and 50S subunits, it traverses the body of the 30S subunit contacting proteins on the other side and probably holding the rRNA structure together. The combined cluster of proteins S8, S12 and S17 appears to hold together the shoulder and platform of the 30S subunit. The sequence is that of Small ribosomal subunit protein uS12 from Acidovorax sp. (strain JS42).